Consider the following 387-residue polypeptide: Cyclin-J-like protein (387 aa).

In terms of domain architecture, Cyclin N-terminal spans 13-142 (DVHCTLREKE…LLEAFSWDLC (130 aa)).

Belongs to the cyclin family. Cyclin J subfamily.

This is Cyclin-J-like protein (Ccnjl) from Mus musculus (Mouse).